A 472-amino-acid chain; its full sequence is 3-isopropylmalate dehydratase large subunit (472 aa).

The interval 61–80 (TPDHNVPTTQKERASGVEGI) is disordered. Cys-353, Cys-414, and Cys-417 together coordinate [4Fe-4S] cluster.

This sequence belongs to the aconitase/IPM isomerase family. LeuC type 1 subfamily. Heterodimer of LeuC and LeuD. [4Fe-4S] cluster is required as a cofactor.

It catalyses the reaction (2R,3S)-3-isopropylmalate = (2S)-2-isopropylmalate. The protein operates within amino-acid biosynthesis; L-leucine biosynthesis; L-leucine from 3-methyl-2-oxobutanoate: step 2/4. In terms of biological role, catalyzes the isomerization between 2-isopropylmalate and 3-isopropylmalate, via the formation of 2-isopropylmaleate. In Saccharophagus degradans (strain 2-40 / ATCC 43961 / DSM 17024), this protein is 3-isopropylmalate dehydratase large subunit.